We begin with the raw amino-acid sequence, 429 residues long: Adenylosuccinate synthetase (429 aa).

GTP contacts are provided by residues 12–18 (GDEGKGK) and 40–42 (GHT). Catalysis depends on Asp13, which acts as the Proton acceptor. Mg(2+) contacts are provided by Asp13 and Gly40. Residues 13-16 (DEGK), 38-41 (NAGH), Thr128, Arg142, Gln223, Thr238, and Arg302 each bind IMP. His41 functions as the Proton donor in the catalytic mechanism. Residue 298 to 304 (TTTGRPR) participates in substrate binding. Residues Arg304, 330-332 (SID), and 412-414 (SVG) contribute to the GTP site.

It belongs to the adenylosuccinate synthetase family. Homodimer. The cofactor is Mg(2+).

It localises to the cytoplasm. The enzyme catalyses IMP + L-aspartate + GTP = N(6)-(1,2-dicarboxyethyl)-AMP + GDP + phosphate + 2 H(+). The protein operates within purine metabolism; AMP biosynthesis via de novo pathway; AMP from IMP: step 1/2. Plays an important role in the de novo pathway of purine nucleotide biosynthesis. Catalyzes the first committed step in the biosynthesis of AMP from IMP. In Bacillus cereus (strain ATCC 10987 / NRS 248), this protein is Adenylosuccinate synthetase.